The sequence spans 326 residues: Transposase InsH for insertion sequence element IS5Y (326 aa).

It belongs to the transposase 11 family.

In terms of biological role, involved in the transposition of the insertion sequence IS5. The chain is Transposase InsH for insertion sequence element IS5Y (insH5) from Escherichia coli (strain K12).